The primary structure comprises 137 residues: Cofilin (137 aa).

The region spanning 5–135 (GVKVSPECLE…AYETVLEKVT (131 aa)) is the ADF-H domain.

It belongs to the actin-binding proteins ADF family.

It is found in the cytoplasm. The protein resides in the cytoskeleton. Its subcellular location is the nucleus matrix. Controls reversibly actin polymerization and depolymerization in a pH-sensitive manner. It has the ability to bind G- and F-actin in a 1:1 ratio of cofilin to actin. Binding to F-actin is regulated by tropomyosin. It is the major component of intranuclear and cytoplasmic actin rods. Required for accumulation of actin at the cell division site via depolymerizing actin at the cell ends. In association with myosin II has a role in the assembly of the contractile ring via severing actin filaments. Involved in the maintenance of the contractile ring once formed. In association with profilin and capping protein, has a role in the mitotic reorganization of the actin cytoskeleton. Severs actin filaments (F-actin). The sequence is that of Cofilin (cof1) from Schizosaccharomyces pombe (strain 972 / ATCC 24843) (Fission yeast).